Here is an 82-residue protein sequence, read N- to C-terminus: Putative defensin-like protein 134 (82 aa).

The first 26 residues, 1–26, serve as a signal peptide directing secretion; that stretch reads MEVRSLNLCFLLVLVLLMSPAPTAVA. Intrachain disulfides connect Cys32-Cys79, Cys42-Cys68, Cys47-Cys74, and Cys51-Cys76.

Belongs to the DEFL family.

Its subcellular location is the secreted. The sequence is that of Putative defensin-like protein 134 from Arabidopsis thaliana (Mouse-ear cress).